Reading from the N-terminus, the 395-residue chain is Acetate kinase (395 aa).

Mg(2+) is bound at residue Asn-8. Lys-15 is an ATP binding site. Residue Arg-89 coordinates substrate. Asp-146 acts as the Proton donor/acceptor in catalysis. ATP is bound by residues 206–210, 281–283, and 329–333; these read HLGNG, DLR, and GIGEN. Glu-382 lines the Mg(2+) pocket.

This sequence belongs to the acetokinase family. As to quaternary structure, homodimer. It depends on Mg(2+) as a cofactor. Requires Mn(2+) as cofactor.

It is found in the cytoplasm. The catalysed reaction is acetate + ATP = acetyl phosphate + ADP. The protein operates within metabolic intermediate biosynthesis; acetyl-CoA biosynthesis; acetyl-CoA from acetate: step 1/2. Its function is as follows. Catalyzes the formation of acetyl phosphate from acetate and ATP. Can also catalyze the reverse reaction. This chain is Acetate kinase, found in Bacillus velezensis (strain DSM 23117 / BGSC 10A6 / LMG 26770 / FZB42) (Bacillus amyloliquefaciens subsp. plantarum).